Here is a 610-residue protein sequence, read N- to C-terminus: Lipoprotein LpqB (610 aa).

The signal sequence occupies residues 1 to 27 (MGAEGGGRRRALRLGAYVGCGAVLLTG). Cysteine 28 carries N-palmitoyl cysteine lipidation. A lipid anchor (S-diacylglycerol cysteine) is attached at cysteine 28.

Belongs to the LpqB lipoprotein family.

The protein localises to the cell membrane. The chain is Lipoprotein LpqB from Streptomyces avermitilis (strain ATCC 31267 / DSM 46492 / JCM 5070 / NBRC 14893 / NCIMB 12804 / NRRL 8165 / MA-4680).